The primary structure comprises 167 residues: Large ribosomal subunit protein uL10 (167 aa).

The protein belongs to the universal ribosomal protein uL10 family. In terms of assembly, part of the ribosomal stalk of the 50S ribosomal subunit. The N-terminus interacts with L11 and the large rRNA to form the base of the stalk. The C-terminus forms an elongated spine to which L12 dimers bind in a sequential fashion forming a multimeric L10(L12)X complex.

Its function is as follows. Forms part of the ribosomal stalk, playing a central role in the interaction of the ribosome with GTP-bound translation factors. This Mycoplasma mobile (strain ATCC 43663 / 163K / NCTC 11711) (Mesomycoplasma mobile) protein is Large ribosomal subunit protein uL10.